Consider the following 221-residue polypeptide: Ribosomal RNA large subunit methyltransferase E (221 aa).

Glycine 60, tryptophan 62, aspartate 89, aspartate 105, and aspartate 134 together coordinate S-adenosyl-L-methionine. The Proton acceptor role is filled by lysine 174.

Belongs to the class I-like SAM-binding methyltransferase superfamily. RNA methyltransferase RlmE family.

The protein resides in the cytoplasm. The enzyme catalyses uridine(2552) in 23S rRNA + S-adenosyl-L-methionine = 2'-O-methyluridine(2552) in 23S rRNA + S-adenosyl-L-homocysteine + H(+). In terms of biological role, specifically methylates the uridine in position 2552 of 23S rRNA at the 2'-O position of the ribose in the fully assembled 50S ribosomal subunit. This chain is Ribosomal RNA large subunit methyltransferase E, found in Cupriavidus necator (strain ATCC 17699 / DSM 428 / KCTC 22496 / NCIMB 10442 / H16 / Stanier 337) (Ralstonia eutropha).